The sequence spans 193 residues: UPF0301 protein Bfl251 (193 aa).

This sequence belongs to the UPF0301 (AlgH) family.

In Blochmanniella floridana, this protein is UPF0301 protein Bfl251.